Consider the following 1121-residue polypeptide: Peroxisomal ATPase PEX1 (1121 aa).

Disordered stretches follow at residues 187–221 (SISS…NNGE) and 1099–1121 (SGRD…STLM). Residues 205–217 (SSTSTATGRRSVT) show a composition bias toward low complexity.

It belongs to the AAA ATPase family. As to quaternary structure, interacts with PEX6; forming the PEX1-PEX6 AAA ATPase complex, which is composed of a heterohexamer formed by a trimer of PEX1-PEX6 dimers.

It localises to the membrane. It carries out the reaction ATP + H2O = ADP + phosphate + H(+). In terms of biological role, component of the PEX1-PEX6 AAA ATPase complex involved in peroxisome biosynthesis. The complex acts as a protein dislocase complex that mediates the ATP-dependent extraction of the PEX5 receptor from peroxisomal membranes, an essential step for PEX5 recycling. Specifically recognizes PEX5 monoubiquitinated at 'Cys-6', and pulls it out of the peroxisome lumen through the PEX2-PEX10-PEX12 retrotranslocation channel. Extraction by the PEX1-PEX6 AAA ATPase complex is accompanied by unfolding of the TPR repeats and release of bound cargo from PEX5. This chain is Peroxisomal ATPase PEX1, found in Komagataella phaffii (strain GS115 / ATCC 20864) (Yeast).